Consider the following 412-residue polypeptide: Serine hydroxymethyltransferase (412 aa).

Residues Leu117 and 121 to 123 contribute to the (6S)-5,6,7,8-tetrahydrofolate site; that span reads GHL. Lys226 bears the N6-(pyridoxal phosphate)lysine mark. (6S)-5,6,7,8-tetrahydrofolate contacts are provided by residues Glu242 and 350 to 352; that span reads SPF.

This sequence belongs to the SHMT family. As to quaternary structure, homodimer. The cofactor is pyridoxal 5'-phosphate.

The protein localises to the cytoplasm. The catalysed reaction is (6R)-5,10-methylene-5,6,7,8-tetrahydrofolate + glycine + H2O = (6S)-5,6,7,8-tetrahydrofolate + L-serine. The protein operates within one-carbon metabolism; tetrahydrofolate interconversion. It functions in the pathway amino-acid biosynthesis; glycine biosynthesis; glycine from L-serine: step 1/1. In terms of biological role, catalyzes the reversible interconversion of serine and glycine with tetrahydrofolate (THF) serving as the one-carbon carrier. Appears to be specific for THF as the pteridine substrate, since the use of tetrahydromethanopterin (H4MPT) is much less efficient. Also exhibits THF-independent aldolase activity toward beta-hydroxyamino acids, producing glycine and aldehydes, via a retro-aldol mechanism. Thus, is able to catalyze the cleavage of L-allo-threonine and L-threo-beta-phenylserine. The sequence is that of Serine hydroxymethyltransferase from Methanosarcina barkeri (strain Fusaro / DSM 804).